The following is a 359-amino-acid chain: NADPH HC-toxin reductase 2 (359 aa).

Residues R39, 67–68 (DL), 87–89 (VAT), Y177, K181, 206–209 (LGLV), and T221 contribute to the NADP(+) site. K181 (proton donor) is an active-site residue.

The protein belongs to the NAD(P)-dependent epimerase/dehydratase family.

In tandem with Hm1, NADPH-dependent HC toxin reductase (HCTR), which inactivates HC toxin, a cyclic tetrapeptide produced by the fungus Cochliobolus carbonum to permit infection and acting as an inhibitor of host histone deacetylases (HDACs), thus conferring resistance against C.carbonum race 1 in resistant cultivars (e.g. cv. B73 and cv. Wisconsin 22). Catalyzes the production of 8-hydroxy derivative of HC-toxin via the reduction of the 8-keto group of 2-amino-9,10-epoxy-8-oxo-decanoic acid, an amino acid of the HC-toxin. This chain is NADPH HC-toxin reductase 2, found in Zea mays (Maize).